The chain runs to 72 residues: MAKDDVIEIDGTVLEALPNANFKVELDNKHVILCHIAGKMRMHYIRIMPGDKVKVELTPYSLDKGRITFRYK.

The S1-like domain maps to 1–72 (MAKDDVIEID…DKGRITFRYK (72 aa)).

The protein belongs to the IF-1 family. As to quaternary structure, component of the 30S ribosomal translation pre-initiation complex which assembles on the 30S ribosome in the order IF-2 and IF-3, IF-1 and N-formylmethionyl-tRNA(fMet); mRNA recruitment can occur at any time during PIC assembly.

The protein localises to the cytoplasm. Functionally, one of the essential components for the initiation of protein synthesis. Stabilizes the binding of IF-2 and IF-3 on the 30S subunit to which N-formylmethionyl-tRNA(fMet) subsequently binds. Helps modulate mRNA selection, yielding the 30S pre-initiation complex (PIC). Upon addition of the 50S ribosomal subunit IF-1, IF-2 and IF-3 are released leaving the mature 70S translation initiation complex. In Campylobacter jejuni subsp. doylei (strain ATCC BAA-1458 / RM4099 / 269.97), this protein is Translation initiation factor IF-1.